The chain runs to 580 residues: MGSTRFFLADLPTRTSESDLQILFQDYGHVEHVDLKRKEQDGATKVIAFVTVQTDDAQYCVNELKWQKLHGEKLRVSLAKESFLDRLKREREENQRREQGEPDESEVRAPSSQLLVQSGQNKRRVFGEDEEIGDDEVAPELLITKKRAANSMHNGRIVIQQEHDVKPLHVIEQHRKAAKQKPDANVSQAEQKRKESLNKMRQGHQQKKSAIQQALSVISVEGSQAKRIKFSDAEEEEASKPVQKAKIQKRDLFENDDDEEEEQIVLPQHKGKKGERLVEMQSKQSIDPRFRITSNFVNEEEEAELEDQPEPEESERKWHMNILEQVVGHAITSANDKDGKSPKNKKMLRFDPAKEGHQKLMRQKQPKEEEEKKEETSSTKAKTADAGNSQASAVSKTAFYIVTDTLRDSLNTRGEGFSLLDMFGSAPEKEVAKRQDQLEKLGHEKILVGKTSANKLGLATLNPFSYDSSDSEDETEVKPKQEQEQEQELEVSKENKAQPAKKSGQKRNKNKLESFFIPRNDPRLKEGAKFFKSTKAVVDHAEYDQVKNRLKLLITKKIAKAKKSLPSKDIKLQRNKKGKN.

Residues 4-81 form the RRM domain; that stretch reads TRFFLADLPT…EKLRVSLAKE (78 aa). Residues 89–100 show a composition bias toward basic and acidic residues; it reads REREENQRREQG. 2 disordered regions span residues 89-131 and 173-211; these read RERE…EDEE and QHRK…KSAI. A compositionally biased stretch (polar residues) spans 110-120; that stretch reads PSSQLLVQSGQ. A Phosphoserine modification is found at Ser231. 2 stretches are compositionally biased toward acidic residues: residues 254–263 and 298–313; these read ENDDDEEEEQ and NEEE…EPEE. Disordered stretches follow at residues 254–316, 333–395, and 463–520; these read ENDD…ESER, SAND…SAVS, and PFSY…IPRN. 2 stretches are compositionally biased toward basic and acidic residues: residues 348 to 358 and 365 to 377; these read LRFDPAKEGHQ and QPKE…EETS. Residues 386-395 show a composition bias toward polar residues; that stretch reads AGNSQASAVS. Ser468 carries the phosphoserine modification. A Phosphothreonine modification is found at Thr475.

The polypeptide is Probable RNA-binding protein CG14230 (Drosophila melanogaster (Fruit fly)).